A 478-amino-acid polypeptide reads, in one-letter code: Kynureninase (478 aa).

Pyridoxal 5'-phosphate contacts are provided by residues Leu-150, Thr-151, 178 to 181 (FPSD), Ser-234, Asp-263, His-266, and Tyr-288. Lys-289 is modified (N6-(pyridoxal phosphate)lysine). 2 residues coordinate pyridoxal 5'-phosphate: Trp-318 and Asn-346.

It belongs to the kynureninase family. As to quaternary structure, homodimer. Pyridoxal 5'-phosphate serves as cofactor.

It localises to the cytoplasm. It catalyses the reaction L-kynurenine + H2O = anthranilate + L-alanine + H(+). The catalysed reaction is 3-hydroxy-L-kynurenine + H2O = 3-hydroxyanthranilate + L-alanine + H(+). Its pathway is amino-acid degradation; L-kynurenine degradation; L-alanine and anthranilate from L-kynurenine: step 1/1. The protein operates within cofactor biosynthesis; NAD(+) biosynthesis; quinolinate from L-kynurenine: step 2/3. Catalyzes the cleavage of L-kynurenine (L-Kyn) and L-3-hydroxykynurenine (L-3OHKyn) into anthranilic acid (AA) and 3-hydroxyanthranilic acid (3-OHAA), respectively. The polypeptide is Kynureninase (Caenorhabditis elegans).